We begin with the raw amino-acid sequence, 99 residues long: Large ribosomal subunit protein uL23 (99 aa).

This sequence belongs to the universal ribosomal protein uL23 family. In terms of assembly, part of the 50S ribosomal subunit. Contacts protein L29, and trigger factor when it is bound to the ribosome.

Its function is as follows. One of the early assembly proteins it binds 23S rRNA. One of the proteins that surrounds the polypeptide exit tunnel on the outside of the ribosome. Forms the main docking site for trigger factor binding to the ribosome. This chain is Large ribosomal subunit protein uL23, found in Xanthomonas axonopodis pv. citri (strain 306).